We begin with the raw amino-acid sequence, 556 residues long: Melanoma-associated antigen B4 (556 aa).

A compositionally biased stretch (basic residues) spans 1 to 15 (MPRGQKSKARAREKR). Positions 1 to 110 (MPRGQKSKAR…RFSENPQNDL (110 aa)) are disordered. Residues 39–73 (PSCSNQDSGDAVASTSTAGFPQKSKSQGEAPTTTA) are compositionally biased toward polar residues. A compositionally biased stretch (basic residues) spans 77 to 87 (GACRRSRKSTR). Residues 111-310 (LTRKTGMLMQ…QAFPTHYEEA (200 aa)) enclose the MAGE domain. The disordered stretch occupies residues 315 to 335 (EERAQAEAVGSPGTSAKDKAE). S325 carries the phosphoserine modification. 15 tandem repeats follow at residues 334-348 (AEAK…CKYQ), 349-363 (AESK…CKDQ), 364-378 (AESK…CKDN), 379-392 (AKSK…RKYK), 393-407 (AKSK…CKDQ), 408-421 (AESK…CKDQ), 422-436 (AESK…CKDQ), 437-451 (AESK…CKDQ), 452-466 (AESK…CKDK), 467-480 (AKSK…HKYK), 481-495 (AKSK…CKDQ), 496-510 (AESK…CKDQ), 511-525 (AESK…CKDN), 526-539 (AKSK…RKYK), and 540-554 (AKSK…GKDK). The interval 334 to 554 (AEAKVTLVDS…PLVDSSGKDK (221 aa)) is 15 X 15 AA approximate tandem repeats.

Expressed in testis (at protein level).

The protein localises to the cytoplasm. This chain is Melanoma-associated antigen B4, found in Mus musculus (Mouse).